A 788-amino-acid chain; its full sequence is Pyridoxal-dependent decarboxylase domain-containing protein 1 (788 aa).

Residues 28–40 (EDSQRRTEEENGK) show a composition bias toward basic and acidic residues. A disordered region spans residues 28–51 (EDSQRRTEEENGKKLISGDIPGPL). T414 is modified (phosphothreonine). A Phosphoserine modification is found at S652. The disordered stretch occupies residues 684–788 (AGVTLPPTPS…SQVEGPESLR (105 aa)). Residues T687 and T691 each carry the phosphothreonine modification. S710, S718, and S722 each carry phosphoserine. A compositionally biased stretch (basic and acidic residues) spans 725-734 (HIEDLEKVER). The span at 738 to 750 (GPEQITLEASSTE) shows a compositional bias: polar residues. S748, S757, S779, and S786 each carry phosphoserine. Residues 772–788 (PHPEDDHSQVEGPESLR) are compositionally biased toward basic and acidic residues.

It belongs to the group II decarboxylase family. It depends on pyridoxal 5'-phosphate as a cofactor.

The sequence is that of Pyridoxal-dependent decarboxylase domain-containing protein 1 (PDXDC1) from Homo sapiens (Human).